A 160-amino-acid polypeptide reads, in one-letter code: MKKKYKKVVVGGTFDRLHLGHKALLRKAFEVGEIVYIGLTSDEMIKEKQYSERILPYEKRLLDLIKFLEVNKYRNYRIMKIHNAIGFTTKIKSLEAIVVSEETYKGAVLVNKAREELGLRPLDIVVIPIIRSRLGCKISSSLIRAGLIDPFGNPIRREEK.

It belongs to the eukaryotic CoaD family.

It localises to the cytoplasm. The enzyme catalyses (R)-4'-phosphopantetheine + ATP + H(+) = 3'-dephospho-CoA + diphosphate. The protein operates within cofactor biosynthesis; coenzyme A biosynthesis. Functionally, reversibly transfers an adenylyl group from ATP to 4'-phosphopantetheine, yielding dephospho-CoA (dPCoA) and pyrophosphate. This is Phosphopantetheine adenylyltransferase from Pyrococcus furiosus (strain ATCC 43587 / DSM 3638 / JCM 8422 / Vc1).